A 289-amino-acid polypeptide reads, in one-letter code: MKLSFTKMHGAGNDFVVLDGYTRALPPLTGAQVRALADRHFGIGADQLLLVEKPTVDGADFKYRIFNCDGGEVEHCGNGARCFVKFVRDHGLTGKASVRVEVKHGVITLTMQDNGEVVVDMGAPVFEPARVPFDASGLDGRREGADTLWPLPVNGVTRWISVVSMGNPHAVQIVDDAEAFAVRVDGPAIERDPRFPQRVNAGFMQIVSRHEVNLRVYERGAGETLACGTGACAAVAAGIRRGRLDSPVTVHTHGGTLTISWNGACDERAPLMMAGPATTVFEGVIELPA.

Asn-13, Gln-47, and Asn-67 together coordinate substrate. Cys-76 functions as the Proton donor in the catalytic mechanism. Substrate-binding positions include 77-78 (GN), Asn-167, Asn-200, and 218-219 (ER). Catalysis depends on Cys-227, which acts as the Proton acceptor. 228–229 (GT) provides a ligand contact to substrate.

The protein belongs to the diaminopimelate epimerase family. Homodimer.

The protein localises to the cytoplasm. The catalysed reaction is (2S,6S)-2,6-diaminopimelate = meso-2,6-diaminopimelate. It participates in amino-acid biosynthesis; L-lysine biosynthesis via DAP pathway; DL-2,6-diaminopimelate from LL-2,6-diaminopimelate: step 1/1. Its function is as follows. Catalyzes the stereoinversion of LL-2,6-diaminopimelate (L,L-DAP) to meso-diaminopimelate (meso-DAP), a precursor of L-lysine and an essential component of the bacterial peptidoglycan. The chain is Diaminopimelate epimerase from Burkholderia mallei (strain NCTC 10247).